The following is a 340-amino-acid chain: Phenylalanine--tRNA ligase alpha subunit (340 aa).

A Mg(2+)-binding site is contributed by Glu-255.

The protein belongs to the class-II aminoacyl-tRNA synthetase family. Phe-tRNA synthetase alpha subunit type 1 subfamily. As to quaternary structure, tetramer of two alpha and two beta subunits. It depends on Mg(2+) as a cofactor.

Its subcellular location is the cytoplasm. It carries out the reaction tRNA(Phe) + L-phenylalanine + ATP = L-phenylalanyl-tRNA(Phe) + AMP + diphosphate + H(+). The protein is Phenylalanine--tRNA ligase alpha subunit of Syntrophomonas wolfei subsp. wolfei (strain DSM 2245B / Goettingen).